We begin with the raw amino-acid sequence, 201 residues long: Glycerol-3-phosphate acyltransferase (201 aa).

A run of 5 helical transmembrane segments spans residues 9-29 (LTLIGALVFGYFLGSIPFGLI), 60-80 (LAAATLIFDMLKGTVAVLVAS), 86-106 (AAIGAGFGAFIGHLFPVWIGF), 116-136 (LGVLIGLAWPGALVFAAVWIV), and 153-173 (IVVPIALYSRGYPAIAVLFAI).

Belongs to the PlsY family. In terms of assembly, probably interacts with PlsX.

The protein localises to the cell inner membrane. It carries out the reaction an acyl phosphate + sn-glycerol 3-phosphate = a 1-acyl-sn-glycero-3-phosphate + phosphate. The protein operates within lipid metabolism; phospholipid metabolism. In terms of biological role, catalyzes the transfer of an acyl group from acyl-phosphate (acyl-PO(4)) to glycerol-3-phosphate (G3P) to form lysophosphatidic acid (LPA). This enzyme utilizes acyl-phosphate as fatty acyl donor, but not acyl-CoA or acyl-ACP. This chain is Glycerol-3-phosphate acyltransferase, found in Brucella anthropi (strain ATCC 49188 / DSM 6882 / CCUG 24695 / JCM 21032 / LMG 3331 / NBRC 15819 / NCTC 12168 / Alc 37) (Ochrobactrum anthropi).